The primary structure comprises 54 residues: Large ribosomal subunit protein bL33 (54 aa).

It belongs to the bacterial ribosomal protein bL33 family.

The protein is Large ribosomal subunit protein bL33 of Buchnera aphidicola subsp. Cinara cedri (strain Cc).